The chain runs to 746 residues: Rhizobactin receptor (746 aa).

An N-terminal signal peptide occupies residues 1-26; the sequence is MGNNENGGISFCVFVVVIGFGTGAVA. The TonB box signature appears at 40-47; sequence EEIVVTGG. A TBDR plug domain is found at 52 to 163; that stretch reads QISEIARTIY…TGGIINIITK (112 aa). The TBDR beta-barrel domain occupies 169-746; it reads EPGLHAEVTG…TFAVSLTKVF (578 aa). Residues 729 to 746 carry the TonB C-terminal box motif; sequence FDYKGRGRTFAVSLTKVF.

It belongs to the TonB-dependent receptor family.

It localises to the cell outer membrane. Its function is as follows. Receptor for the siderophore rhizobactin. The sequence is that of Rhizobactin receptor (rhtA) from Rhizobium meliloti (strain 1021) (Ensifer meliloti).